Here is a 165-residue protein sequence, read N- to C-terminus: Thiol peroxidase (165 aa).

The Thioredoxin domain maps to 18-164 (RKVGDKAPNF…YEAAIEAAKK (147 aa)). Cys-60 (cysteine sulfenic acid (-SOH) intermediate) is an active-site residue. Residues Cys-60 and Cys-94 are joined by a disulfide bond.

Belongs to the peroxiredoxin family. Tpx subfamily. Homodimer.

The catalysed reaction is a hydroperoxide + [thioredoxin]-dithiol = an alcohol + [thioredoxin]-disulfide + H2O. Functionally, thiol-specific peroxidase that catalyzes the reduction of hydrogen peroxide and organic hydroperoxides to water and alcohols, respectively. Plays a role in cell protection against oxidative stress by detoxifying peroxides. The sequence is that of Thiol peroxidase from Listeria monocytogenes serotype 4b (strain F2365).